Here is a 242-residue protein sequence, read N- to C-terminus: Probable transcriptional regulatory protein Csac_0964 (242 aa).

The disordered stretch occupies residues 1–20; the sequence is MSGHSKWANIRHKKEKTDAQ.

This sequence belongs to the TACO1 family.

The protein localises to the cytoplasm. The sequence is that of Probable transcriptional regulatory protein Csac_0964 from Caldicellulosiruptor saccharolyticus (strain ATCC 43494 / DSM 8903 / Tp8T 6331).